The chain runs to 421 residues: Nuclear envelope integral membrane protein 2 (421 aa).

Positions 1 to 22 (MLPRLWWLVLWLQPLATLPASA) are cleaved as a signal peptide. 6 consecutive transmembrane segments (helical) span residues 64 to 84 (YMWS…IVYI), 147 to 167 (NIVD…FLYA), 175 to 195 (VFYY…FVLL), 206 to 226 (TFGA…CQLM), 238 to 258 (MYIL…CYSH), and 281 to 301 (LVYT…VLLF).

This sequence belongs to the NEMP family. In terms of tissue distribution, in the ovary, highly expressed in somatic cells.

It localises to the nucleus inner membrane. The protein is Nuclear envelope integral membrane protein 2 (Nemp2) of Mus musculus (Mouse).